The sequence spans 343 residues: MKIKALSKLKPEQGIWMTEVDKPEVGHNDILIKIKKTAICGTDVHIYNWDEWSQKTIPVPMVVGHEYVGEVVAIGQEVRGFEIGDRVSGEGHITCGHCRNCRGGRTHLCRNTIGVGVNREGAFAEYLVIPAFNAFKIPDEISDDLASIFDPFGNAVHTALSFDLVGEDVLITGAGPIGIMAAAVAKHVGARHVVITDVNEYRLELARKMGVTRAVNVAEEKLEDVMAELGMTEGFDVGLEMSGNPAAFNSMLTTMNHGGRIALLGIPPSDMGIDWNQVIFKGLVIKGIYGREMFETWYKMASLIQSGLDLSPIITHHYKIDDFQEGFDVMRSGMSGKVILDWE.

Residue Cys-40 participates in Zn(2+) binding. Active-site charge relay system residues include Thr-42 and His-45. Zn(2+) is bound by residues His-65, Glu-66, Cys-95, Cys-98, Cys-101, and Cys-109. NAD(+) contacts are provided by residues Ile-177, Asp-197, Arg-202, 264 to 266 (LGI), and 288 to 289 (IY).

This sequence belongs to the zinc-containing alcohol dehydrogenase family. In terms of assembly, homotetramer. Zn(2+) serves as cofactor.

The protein localises to the cytoplasm. The catalysed reaction is L-threonine + NAD(+) = (2S)-2-amino-3-oxobutanoate + NADH + H(+). It functions in the pathway amino-acid degradation; L-threonine degradation via oxydo-reductase pathway; glycine from L-threonine: step 1/2. In terms of biological role, catalyzes the NAD(+)-dependent oxidation of L-threonine to 2-amino-3-ketobutyrate. This Vibrio parahaemolyticus serotype O3:K6 (strain RIMD 2210633) protein is L-threonine 3-dehydrogenase.